The sequence spans 307 residues: MTSAQNESQALGDLAARQLANATKTVPQLSTITPRWLLHLLNWVPVEAGIYRVNRVVNPEQVAIKAEAGAGSEEPLPQTYVDYETSPREYTLRSISTLVDIHTRVSDLYSSPHDQIAQQLRLTIETIKERQELELINSPEYGLLAQATPEQTIQTLAGAPTPDDLDALITKVWKTPSFFLTHPLGIAAFGREATYRGVPPPVVSLFGAQFITWRGIPLIPSDKVPVEDGKTKFILVRTGEERQGVVGLFQPGLVGEQAPGLSVRFTGINQSAIATYLVTLYTSLAVLTDDALAVLDDVAVDQFHEYK.

Belongs to the encapsulin family. Family 2A subfamily. As to quaternary structure, the encapsulin nanocompartment is formed by 60 subunits; monomers form pentamers which assemble to form shells. There are 12 charged pores where the pentamers meet as well as 3-fold axis channels and dimer channels. Isolated from bacteria in a complex with cysteine desulfurase (AC Q9KII6).

Its subcellular location is the encapsulin nanocompartment. The protein resides in the cell membrane. Functionally, shell component of a type 2A encapsulin nanocompartment. Forms encapsulin nanocompartments about 24 nm in diameter from 60 monomers, probably involved in sulfur metabolism. Probably encapsulates cysteine desulfurase. The sequence is that of Type 2A encapsulin shell protein from Mycolicibacterium paratuberculosis (strain ATCC BAA-968 / K-10) (Mycobacterium paratuberculosis).